Reading from the N-terminus, the 321-residue chain is NADH-ubiquinone oxidoreductase chain 1 (321 aa).

8 consecutive transmembrane segments (helical) span residues isoleucine 9 to leucine 29, isoleucine 75 to methionine 95, leucine 106 to glycine 126, threonine 151 to phenylalanine 171, histidine 177 to alanine 197, valine 219 to phenylalanine 239, proline 256 to tryptophan 276, and tyrosine 297 to glycine 317.

It belongs to the complex I subunit 1 family.

Its subcellular location is the mitochondrion inner membrane. The enzyme catalyses a ubiquinone + NADH + 5 H(+)(in) = a ubiquinol + NAD(+) + 4 H(+)(out). Functionally, core subunit of the mitochondrial membrane respiratory chain NADH dehydrogenase (Complex I) that is believed to belong to the minimal assembly required for catalysis. Complex I functions in the transfer of electrons from NADH to the respiratory chain. The immediate electron acceptor for the enzyme is believed to be ubiquinone. The sequence is that of NADH-ubiquinone oxidoreductase chain 1 (MT-ND1) from Lycodon semicarinatus (Ryukyu odd-tooth snake).